We begin with the raw amino-acid sequence, 405 residues long: MQYTEVMVRYGELSTKGKNRKDFIGRLAGNVTRALQDFPEIEIHPKHDRMHIVLNGAPFDKIDQRLKLVFGIQTYSPTIKVEKNLDAIKKASLELMQATFKDGMTFKVNTRRSDHEFEYDTNQLNTMIGDYLFDNMDNLKVKMKKPDLVLRIEVRQDAIYISNQLLHGAGGMPVGTAGRAVMMLSGGIDSPVASYLAMKRGVEIDMVHFFSPPYTTEKALAKAKELTGILANYSGKINFIAVPFTEIQEQIKEKLPEGYLMTIQRRFMLQLADRIRAKRGGLAIFNGESVGQVASQTLESMVAINDVTSTPVLRPVATMDKTEIIKLAEQIGTFDLSIEPFEDCCTIFAPPRPKTKPKLDEARKLENRLDAEKMIQRAIDGMKITPIYPNQKFLDDKAQEDADLL.

One can recognise a THUMP domain in the interval 60–165 (DKIDQRLKLV…QDAIYISNQL (106 aa)). Residues 183–184 (ML), 208–209 (HF), arginine 265, glycine 287, and glutamine 296 contribute to the ATP site.

This sequence belongs to the ThiI family.

It localises to the cytoplasm. The catalysed reaction is [ThiI sulfur-carrier protein]-S-sulfanyl-L-cysteine + a uridine in tRNA + 2 reduced [2Fe-2S]-[ferredoxin] + ATP + H(+) = [ThiI sulfur-carrier protein]-L-cysteine + a 4-thiouridine in tRNA + 2 oxidized [2Fe-2S]-[ferredoxin] + AMP + diphosphate. The enzyme catalyses [ThiS sulfur-carrier protein]-C-terminal Gly-Gly-AMP + S-sulfanyl-L-cysteinyl-[cysteine desulfurase] + AH2 = [ThiS sulfur-carrier protein]-C-terminal-Gly-aminoethanethioate + L-cysteinyl-[cysteine desulfurase] + A + AMP + 2 H(+). The protein operates within cofactor biosynthesis; thiamine diphosphate biosynthesis. Catalyzes the ATP-dependent transfer of a sulfur to tRNA to produce 4-thiouridine in position 8 of tRNAs, which functions as a near-UV photosensor. Also catalyzes the transfer of sulfur to the sulfur carrier protein ThiS, forming ThiS-thiocarboxylate. This is a step in the synthesis of thiazole, in the thiamine biosynthesis pathway. The sulfur is donated as persulfide by IscS. The polypeptide is Probable tRNA sulfurtransferase (Lactobacillus gasseri (strain ATCC 33323 / DSM 20243 / BCRC 14619 / CIP 102991 / JCM 1131 / KCTC 3163 / NCIMB 11718 / NCTC 13722 / AM63)).